The following is a 152-amino-acid chain: Protein ripply3 (152 aa).

The span at 1–24 shows a compositional bias: basic and acidic residues; it reads MRPEAAGVREARGRLCHCPGDDPG. Disordered regions lie at residues 1 to 76 and 113 to 152; these read MRPE…GAFG and FYND…ERAE. Residues 40 to 43 carry the WRPW motif motif; it reads WRPW. The interval 79–114 is ripply homology domain; that stretch reads HPVRLYLPVSKRQEYLQSSGEKVLASFPVQATIHFY. Over residues 116 to 130 the composition is skewed to acidic residues; the sequence is DDSESGSEEEQEEEA. Positions 140 to 152 are enriched in basic and acidic residues; the sequence is AEVRDSAQEERAE.

The protein belongs to the ripply family. Interacts with TBX1.

Its subcellular location is the nucleus. In terms of biological role, acts as a transcriptional corepressor. Negative regulator of the transcriptional activity of TBX1. Plays a role in the development of the pharyngeal apparatus and derivatives. The sequence is that of Protein ripply3 (Ripply3) from Mus musculus (Mouse).